We begin with the raw amino-acid sequence, 332 residues long: L-lactate dehydrogenase A chain (332 aa).

Ala-2 bears the N-acetylalanine mark. N6-acetyllysine; alternate is present on Lys-5. Position 5 is an N6-succinyllysine; alternate (Lys-5). Lys-14 bears the N6-acetyllysine mark. 29–57 contacts NAD(+); the sequence is GAVGMACAISILMKELADEIALVDVMEDK. Lys-57 is modified (N6-acetyllysine; alternate). Lys-57 is covalently cross-linked (Glycyl lysine isopeptide (Lys-Gly) (interchain with G-Cter in SUMO2); alternate). An N6-acetyllysine modification is found at Lys-81. Residue Arg-99 coordinates NAD(+). Arg-106 provides a ligand contact to substrate. Position 118 is an N6-acetyllysine; alternate (Lys-118). Lys-118 is subject to N6-succinyllysine; alternate. An N6-acetyllysine modification is found at Lys-126. Asn-138 provides a ligand contact to NAD(+). 2 residues coordinate substrate: Asn-138 and Arg-169. Catalysis depends on His-193, which acts as the Proton acceptor. Lys-224 and Lys-232 each carry N6-acetyllysine. Residue Tyr-239 is modified to Phosphotyrosine. Lys-243 bears the N6-acetyllysine mark. Position 248 (Thr-248) interacts with substrate. Position 309 is a phosphothreonine (Thr-309). The residue at position 318 (Lys-318) is an N6-acetyllysine; alternate. Lys-318 is subject to N6-succinyllysine; alternate. Position 322 is a phosphothreonine (Thr-322).

The protein belongs to the LDH/MDH superfamily. LDH family. Homotetramer. Interacts with PTEN upstream reading frame protein MP31. ISGylated.

Its subcellular location is the cytoplasm. It catalyses the reaction (S)-lactate + NAD(+) = pyruvate + NADH + H(+). It functions in the pathway fermentation; pyruvate fermentation to lactate; (S)-lactate from pyruvate: step 1/1. Functionally, interconverts simultaneously and stereospecifically pyruvate and lactate with concomitant interconversion of NADH and NAD(+). The chain is L-lactate dehydrogenase A chain (LDHA) from Sus scrofa (Pig).